The following is a 246-amino-acid chain: Ribonuclease PH (246 aa).

Residues Arg-86 and 124-126 each bind phosphate; that span reads GTR.

Belongs to the RNase PH family. In terms of assembly, homohexameric ring arranged as a trimer of dimers.

It carries out the reaction tRNA(n+1) + phosphate = tRNA(n) + a ribonucleoside 5'-diphosphate. Its function is as follows. Phosphorolytic 3'-5' exoribonuclease that plays an important role in tRNA 3'-end maturation. Removes nucleotide residues following the 3'-CCA terminus of tRNAs; can also add nucleotides to the ends of RNA molecules by using nucleoside diphosphates as substrates, but this may not be physiologically important. Probably plays a role in initiation of 16S rRNA degradation (leading to ribosome degradation) during starvation. The sequence is that of Ribonuclease PH from Bacillus licheniformis (strain ATCC 14580 / DSM 13 / JCM 2505 / CCUG 7422 / NBRC 12200 / NCIMB 9375 / NCTC 10341 / NRRL NRS-1264 / Gibson 46).